The following is a 100-amino-acid chain: Small ribosomal subunit protein uS14c (100 aa).

The protein belongs to the universal ribosomal protein uS14 family. Part of the 30S ribosomal subunit.

Its subcellular location is the plastid. The protein resides in the chloroplast. Functionally, binds 16S rRNA, required for the assembly of 30S particles. This is Small ribosomal subunit protein uS14c from Lactuca sativa (Garden lettuce).